A 156-amino-acid chain; its full sequence is Transcription elongation factor GreA (156 aa).

Positions 2 to 27 (EKTFPMTKEGLDKLKAELENLKLVKR) form a coiled coil.

The protein belongs to the GreA/GreB family.

Functionally, necessary for efficient RNA polymerase transcription elongation past template-encoded arresting sites. The arresting sites in DNA have the property of trapping a certain fraction of elongating RNA polymerases that pass through, resulting in locked ternary complexes. Cleavage of the nascent transcript by cleavage factors such as GreA or GreB allows the resumption of elongation from the new 3'terminus. GreA releases sequences of 2 to 3 nucleotides. The chain is Transcription elongation factor GreA from Lactococcus lactis subsp. cremoris (strain MG1363).